A 1154-amino-acid polypeptide reads, in one-letter code: Diacylglycerol kinase eta (1154 aa).

The segment at 1–54 (MAGAGYQHHPPGGAAVGTSAVSPTAAGPGEDSSDSEAEQGGPQKLIRKVSTSGQ) is disordered. Residues 59 to 152 (TSIKEGQLLK…WISSLKSVQS (94 aa)) enclose the PH domain. 2 Phorbol-ester/DAG-type zinc fingers span residues 169–219 (MHNW…TNNC) and 241–292 (PHQW…HPVC). Residues 322 to 457 (FCVSPLLVFV…LDRWSIMTYE (136 aa)) enclose the DAGKc domain. 3 disordered regions span residues 560–608 (QASR…AVKP), 634–678 (DEQT…APEA), and 1123–1154 (FKMEKAQKQKTSSQPGPGDTESGSYEANSPGN). The span at 573–586 (PEEDAVESSSEESL) shows a compositional bias: acidic residues. Basic and acidic residues predominate over residues 656–667 (DDSKDNDTKESP). A compositionally biased stretch (polar residues) spans 1131–1154 (QKTSSQPGPGDTESGSYEANSPGN).

This sequence belongs to the eukaryotic diacylglycerol kinase family. Interacts with RAF1 and BRAF. In terms of processing, phosphorylated. Phosphorylation does not inhibit catalytic activity. In terms of tissue distribution, expressed in a wide variety of tissues. Most abundant in the brain and testis; also found in lung, spleen, and prostate (at protein level).

The protein resides in the cytoplasm. It localises to the cell membrane. It carries out the reaction a 1,2-diacyl-sn-glycerol + ATP = a 1,2-diacyl-sn-glycero-3-phosphate + ADP + H(+). It catalyses the reaction 1,2-di-(9Z-octadecenoyl)-sn-glycerol + ATP = 1,2-di-(9Z-octadecenoyl)-sn-glycero-3-phosphate + ADP + H(+). Its pathway is lipid metabolism; glycerolipid metabolism. Diacylglycerol kinase that converts diacylglycerol/DAG into phosphatidic acid/phosphatidate/PA and regulates the respective levels of these two bioactive lipids. Thereby, acts as a central switch between the signaling pathways activated by these second messengers with different cellular targets and opposite effects in numerous biological processes. Plays a key role in promoting cell growth. Activates the Ras/B-Raf/C-Raf/MEK/ERK signaling pathway induced by EGF. Regulates the recruitment of RAF1 and BRAF from cytoplasm to membranes and their heterodimerization. This Mesocricetus auratus (Golden hamster) protein is Diacylglycerol kinase eta (DGKH).